A 196-amino-acid chain; its full sequence is Chaperone protein TorD (196 aa).

The protein belongs to the TorD/DmsD family. TorD subfamily.

The protein resides in the cytoplasm. Functionally, involved in the biogenesis of TorA. Acts on TorA before the insertion of the molybdenum cofactor and, as a result, probably favors a conformation of the apoenzyme that is competent for acquiring the cofactor. The chain is Chaperone protein TorD from Pasteurella multocida (strain Pm70).